The following is an 82-amino-acid chain: Small ribosomal subunit protein uS17 (82 aa).

This sequence belongs to the universal ribosomal protein uS17 family. In terms of assembly, part of the 30S ribosomal subunit.

One of the primary rRNA binding proteins, it binds specifically to the 5'-end of 16S ribosomal RNA. The polypeptide is Small ribosomal subunit protein uS17 (Bradyrhizobium diazoefficiens (strain JCM 10833 / BCRC 13528 / IAM 13628 / NBRC 14792 / USDA 110)).